Here is a 566-residue protein sequence, read N- to C-terminus: Proline--tRNA ligase (566 aa).

The protein belongs to the class-II aminoacyl-tRNA synthetase family. ProS type 1 subfamily. As to quaternary structure, homodimer.

The protein localises to the cytoplasm. It carries out the reaction tRNA(Pro) + L-proline + ATP = L-prolyl-tRNA(Pro) + AMP + diphosphate. Functionally, catalyzes the attachment of proline to tRNA(Pro) in a two-step reaction: proline is first activated by ATP to form Pro-AMP and then transferred to the acceptor end of tRNA(Pro). As ProRS can inadvertently accommodate and process non-cognate amino acids such as alanine and cysteine, to avoid such errors it has two additional distinct editing activities against alanine. One activity is designated as 'pretransfer' editing and involves the tRNA(Pro)-independent hydrolysis of activated Ala-AMP. The other activity is designated 'posttransfer' editing and involves deacylation of mischarged Ala-tRNA(Pro). The misacylated Cys-tRNA(Pro) is not edited by ProRS. This Staphylococcus saprophyticus subsp. saprophyticus (strain ATCC 15305 / DSM 20229 / NCIMB 8711 / NCTC 7292 / S-41) protein is Proline--tRNA ligase.